The following is a 743-amino-acid chain: Dolichyl-phosphooligosaccharide-protein glycotransferase 2 (743 aa).

Residues 1 to 7 (MKIDKRL) lie on the Cytoplasmic side of the membrane. The chain crosses the membrane as a helical span at residues 8 to 28 (MVIVAIATLFRMIPFRLKYLV). The DXD motif 1 signature appears at 29-31 (GSD). The Extracellular portion of the chain corresponds to 29–91 (GSDPYFHLAY…FSFLGISLYT (63 aa)). Position 31 (aspartate 31) interacts with Mn(2+). The chain crosses the membrane as a helical span at residues 92–112 (AFRVTPVIFGVLTVVFFYLSL). The Cytoplasmic segment spans residues 113–119 (KKLYNRD). Residues 120–140 (VAFIVGLFLGVNYGHIFRSMA) traverse the membrane as a helical segment. Topologically, residues 141–144 (NYYR) are extracellular. Mn(2+)-binding residues include arginine 144 and aspartate 146. The DXD motif 2 motif lies at 144-146 (RGD). The helical transmembrane segment at 145–165 (GDNYMLFWYSVALLGIALGLK) threads the bilayer. Residues 166–170 (TRSKY) lie on the Cytoplasmic side of the membrane. 2 helical membrane passes run 171–191 (RYLF…FWQA) and 192–212 (YYPI…YAYL). The Cytoplasmic segment spans residues 213-216 (KSPK). The helical transmembrane segment at 217–237 (LFLDSILIVLSTGLGVLIANI) threads the bilayer. Over 238-272 (LGDKVGYGMLGYTDWMGKKVAETFGLEFGFIKDAY) the chain is Extracellular. The helical transmembrane segment at 273–293 (LLIHVKYLLPLSLVFLGFLII) threads the bilayer. Topologically, residues 294-302 (TKKLNPKIK) are cytoplasmic. A helical membrane pass occupies residues 303–323 (VGVLVGGSILAFIVMLVKFPA). Topologically, residues 324–345 (LKDLSTGFGTFREVPISETLPP) are extracellular. Residues 333-336 (TFRE) carry the TIXE motif motif. Residues 346 to 366 (TLDDLWRAYNIAIFLAALYIL) form a helical membrane-spanning segment. Over 367–373 (RLRKIRS) the chain is Cytoplasmic. Residues 374 to 391 (GDAILLGYVITSLWMLRY) traverse the membrane as a helical segment. The Extracellular portion of the chain corresponds to 392–394 (WTR). Arginine 394 serves as a coordination point for a glycophospholipid. The helical transmembrane segment at 395-415 (FLFTAAPAVAFLSGIGVYELT) threads the bilayer. At 416–424 (RRIKENKIR) the chain is on the cytoplasmic side. Residues 425–445 (ITSLGVVILLSSAFSLGEVYS) traverse the membrane as a helical segment. At 446 to 743 (VKPFMNENWE…LDRGIVRVKN (298 aa)) the chain is on the extracellular side. The tract at residues 474 to 476 (WWD) is interacts with target acceptor peptide in protein substrate. The short motif at 474 to 478 (WWDWG) is the WWDYG motif element. Positions 526–533 (DILKFEAI) match the DK motif motif.

This sequence belongs to the STT3 family. It depends on Mn(2+) as a cofactor. Mg(2+) serves as cofactor.

The protein resides in the cell membrane. It carries out the reaction an archaeal dolichyl phosphooligosaccharide + [protein]-L-asparagine = an archaeal dolichyl phosphate + a glycoprotein with the oligosaccharide chain attached by N-beta-D-glycosyl linkage to a protein L-asparagine.. It functions in the pathway protein modification; protein glycosylation. Functionally, oligosaccharyl transferase (OST) that catalyzes the initial transfer of a defined glycan (ManNAcXyl(2)GlcAMan(2)GalNAc in P.furiosus) from the lipid carrier dolichol-monophosphate to an asparagine residue within an Asn-X-Ser/Thr consensus motif in nascent polypeptide chains, the first step in protein N-glycosylation. The polypeptide is Dolichyl-phosphooligosaccharide-protein glycotransferase 2 (aglB2) (Pyrococcus furiosus (strain ATCC 43587 / DSM 3638 / JCM 8422 / Vc1)).